The following is a 405-amino-acid chain: MNASGSAPLGANSEVGQLRAVLLHRPGDELKRLTPRNNDQLLFDGLPWVDRAQEEHDAFADLLRSRGVEVLLLSDLLAETLGASGAARIQGIGAAVDPRKLGHTLAQELAAHLRGVPAPELSTILTAGMTFDELPVAANTASLVRRMHHGGDFVIDPLPNLLFTRDSSFWIGPRVAITSLALPARVRETSLTDIIYAHHPRFRGARRAYESHTAPVEGGDVLLLAPGVVAVGVGERTTPAGAEALARSVFEDELAHTVLVVPIAQARASMHLDTVCTMVDHDAVVMYPIIQDTLSAFTIHREDNGVSIRGADPFLSAAAEAMGIGKLRVIDTGLDNVTAEREQWDDGNNTLALAPGVVVAYERNVETNARLEASGIEVLRIAGSELGSGRGGPRCMSCPVARDPL.

Cysteine 395 (amidino-cysteine intermediate) is an active-site residue.

Belongs to the arginine deiminase family.

It localises to the cytoplasm. The enzyme catalyses L-arginine + H2O = L-citrulline + NH4(+). It functions in the pathway amino-acid degradation; L-arginine degradation via ADI pathway; carbamoyl phosphate from L-arginine: step 1/2. This chain is Arginine deiminase, found in Rhodococcus opacus (strain B4).